Reading from the N-terminus, the 87-residue chain is Exodeoxyribonuclease 7 small subunit (87 aa).

The protein belongs to the XseB family. As to quaternary structure, heterooligomer composed of large and small subunits.

It is found in the cytoplasm. It carries out the reaction Exonucleolytic cleavage in either 5'- to 3'- or 3'- to 5'-direction to yield nucleoside 5'-phosphates.. Its function is as follows. Bidirectionally degrades single-stranded DNA into large acid-insoluble oligonucleotides, which are then degraded further into small acid-soluble oligonucleotides. The polypeptide is Exodeoxyribonuclease 7 small subunit (Solidesulfovibrio magneticus (strain ATCC 700980 / DSM 13731 / RS-1) (Desulfovibrio magneticus)).